The sequence spans 299 residues: Oxygen-dependent coproporphyrinogen-III oxidase (299 aa).

Ser92 is a substrate binding site. Residues His96 and His106 each coordinate a divalent metal cation. His106 (proton donor) is an active-site residue. Substrate is bound at residue 108-110; it reads NVR. A divalent metal cation contacts are provided by His145 and His175. The important for dimerization stretch occupies residues 240 to 275; it reads YVEFNLVWDRGTLFGLQTGGRTESILMSMPPLVRWE. Residue 258–260 participates in substrate binding; the sequence is GGR.

Belongs to the aerobic coproporphyrinogen-III oxidase family. In terms of assembly, homodimer. A divalent metal cation is required as a cofactor.

The protein resides in the cytoplasm. The catalysed reaction is coproporphyrinogen III + O2 + 2 H(+) = protoporphyrinogen IX + 2 CO2 + 2 H2O. It participates in porphyrin-containing compound metabolism; protoporphyrin-IX biosynthesis; protoporphyrinogen-IX from coproporphyrinogen-III (O2 route): step 1/1. Involved in the heme biosynthesis. Catalyzes the aerobic oxidative decarboxylation of propionate groups of rings A and B of coproporphyrinogen-III to yield the vinyl groups in protoporphyrinogen-IX. The sequence is that of Oxygen-dependent coproporphyrinogen-III oxidase from Salmonella enteritidis PT4 (strain P125109).